The chain runs to 459 residues: tRNA modification GTPase MnmE (459 aa).

(6S)-5-formyl-5,6,7,8-tetrahydrofolate contacts are provided by R22, E85, and R124. The TrmE-type G domain maps to 221–380 (GLSTVIVGKP…LELQIRDLFF (160 aa)). N231 provides a ligand contact to K(+). Residues 231-236 (NVGKSS), 250-256 (TEVAGTT), and 275-278 (DTAG) contribute to the GTP site. S235 serves as a coordination point for Mg(2+). Residues T250, V252, and T255 each coordinate K(+). Residue T256 participates in Mg(2+) binding. K459 contacts (6S)-5-formyl-5,6,7,8-tetrahydrofolate.

Belongs to the TRAFAC class TrmE-Era-EngA-EngB-Septin-like GTPase superfamily. TrmE GTPase family. In terms of assembly, homodimer. Heterotetramer of two MnmE and two MnmG subunits. K(+) serves as cofactor.

It localises to the cytoplasm. In terms of biological role, exhibits a very high intrinsic GTPase hydrolysis rate. Involved in the addition of a carboxymethylaminomethyl (cmnm) group at the wobble position (U34) of certain tRNAs, forming tRNA-cmnm(5)s(2)U34. The sequence is that of tRNA modification GTPase MnmE from Staphylococcus haemolyticus (strain JCSC1435).